We begin with the raw amino-acid sequence, 426 residues long: 5-aminovalerate aminotransferase DavT (426 aa).

Pyridoxal 5'-phosphate contacts are provided by residues 112–113 (GS), Tyr-139, and 240–243 (DEVQ). Lys-269 is modified (N6-(pyridoxal phosphate)lysine). Residue Thr-298 coordinates pyridoxal 5'-phosphate.

The protein belongs to the class-III pyridoxal-phosphate-dependent aminotransferase family. Pyridoxal 5'-phosphate serves as cofactor.

The catalysed reaction is 5-aminopentanoate + 2-oxoglutarate = 5-oxopentanoate + L-glutamate. Catalyzes the conversion of 5-aminovalerate to 5-oxopentanoate. This chain is 5-aminovalerate aminotransferase DavT (davT), found in Pseudomonas aeruginosa (strain ATCC 15692 / DSM 22644 / CIP 104116 / JCM 14847 / LMG 12228 / 1C / PRS 101 / PAO1).